A 38-amino-acid polypeptide reads, in one-letter code: Photosystem II reaction center protein L (38 aa).

A helical membrane pass occupies residues 17-37; sequence SLYWGLLLIFVLAVSFSNYFF.

This sequence belongs to the PsbL family. In terms of assembly, PSII is composed of 1 copy each of membrane proteins PsbA, PsbB, PsbC, PsbD, PsbE, PsbF, PsbH, PsbI, PsbJ, PsbK, PsbL, PsbM, PsbT, PsbX, PsbY, PsbZ, Psb30/Ycf12, at least 3 peripheral proteins of the oxygen-evolving complex and a large number of cofactors. It forms dimeric complexes.

It localises to the plastid. It is found in the chloroplast thylakoid membrane. In terms of biological role, one of the components of the core complex of photosystem II (PSII). PSII is a light-driven water:plastoquinone oxidoreductase that uses light energy to abstract electrons from H(2)O, generating O(2) and a proton gradient subsequently used for ATP formation. It consists of a core antenna complex that captures photons, and an electron transfer chain that converts photonic excitation into a charge separation. This subunit is found at the monomer-monomer interface and is required for correct PSII assembly and/or dimerization. This chain is Photosystem II reaction center protein L, found in Amborella trichopoda.